The sequence spans 234 residues: Glycerol uptake facilitator protein (234 aa).

The next 6 membrane-spanning stretches (helical) occupy residues 9–29 (FLGT…VVLP), 37–57 (GWIV…FVSG), 61–81 (PAYL…LPWA), 83–103 (VLPY…LVWL), 135–155 (LISE…LGLY), and 159–179 (AGIG…SLGG). The NPA 1 motif lies at 65–67 (NPA). The short motif at 186 to 188 (NPA) is the NPA 2 element. A helical transmembrane segment spans residues 214–234 (WIPVVGPVIGAALAVLVFSLF).

This sequence belongs to the MIP/aquaporin (TC 1.A.8) family.

The protein localises to the cell membrane. It carries out the reaction glycerol(in) = glycerol(out). Its function is as follows. Mediates glycerol diffusion across the cytoplasmic membrane via a pore-type mechanism. The polypeptide is Glycerol uptake facilitator protein (glpF) (Streptococcus pneumoniae serotype 4 (strain ATCC BAA-334 / TIGR4)).